We begin with the raw amino-acid sequence, 228 residues long: Ribosomal RNA small subunit methyltransferase G (228 aa).

S-adenosyl-L-methionine-binding positions include G82, L87, 105–107 (DAT), 133–134 (VE), and R147.

It belongs to the methyltransferase superfamily. RNA methyltransferase RsmG family.

The protein resides in the cytoplasm. In terms of biological role, specifically methylates the N7 position of a guanine in 16S rRNA. This chain is Ribosomal RNA small subunit methyltransferase G, found in Pelodictyon phaeoclathratiforme (strain DSM 5477 / BU-1).